The primary structure comprises 342 residues: Renalase (342 aa).

The first 17 residues, 1 to 17 (MAQVLIVGAGMTGSLCA), serve as a signal peptide directing secretion. Residues threonine 12, arginine 42, and 61–62 (QY) contribute to the FAD site.

This sequence belongs to the renalase family. It depends on FAD as a cofactor. Secreted into the blood by the kidney. Highly expressed in the kidney, expressed at lower level in heart, skeletal muscle and small intestine. Its plasma concentration is markedly reduced in patients with end-stage renal disease, as compared with healthy subjects.

Its subcellular location is the secreted. It carries out the reaction 1,2-dihydro-beta-NAD + O2 + H(+) = H2O2 + NAD(+). The enzyme catalyses 1,2-dihydro-beta-NADP + O2 + H(+) = H2O2 + NADP(+). The catalysed reaction is 1,6-dihydro-beta-NADP + O2 + H(+) = H2O2 + NADP(+). It catalyses the reaction 1,6-dihydro-beta-NAD + O2 + H(+) = H2O2 + NAD(+). Functionally, catalyzes the oxidation of the less abundant 1,2-dihydro-beta-NAD(P) and 1,6-dihydro-beta-NAD(P) to form beta-NAD(P)(+). The enzyme hormone is secreted by the kidney, and circulates in blood and modulates cardiac function and systemic blood pressure. Lowers blood pressure in vivo by decreasing cardiac contractility and heart rate and preventing a compensatory increase in peripheral vascular tone, suggesting a causal link to the increased plasma catecholamine and heightened cardiovascular risk. High concentrations of catecholamines activate plasma renalase and promotes its secretion and synthesis. This Homo sapiens (Human) protein is Renalase (RNLS).